Reading from the N-terminus, the 191-residue chain is Holliday junction branch migration complex subunit RuvA (191 aa).

The domain I stretch occupies residues 1–64; the sequence is MIGSITGNVE…DNITQLYGFL (64 aa). The tract at residues 65 to 142 is domain II; it reads NRQEQDYFKM…KMPIEETFSI (78 aa). The segment at 143 to 146 is flexible linker; sequence IEND. The interval 146–191 is domain III; sequence DDSLAALISLGYEKLKAFNVIQEIKSKTPDASTQEVIRKALQKLSQ.

This sequence belongs to the RuvA family. In terms of assembly, homotetramer. Forms an RuvA(8)-RuvB(12)-Holliday junction (HJ) complex. HJ DNA is sandwiched between 2 RuvA tetramers; dsDNA enters through RuvA and exits via RuvB. An RuvB hexamer assembles on each DNA strand where it exits the tetramer. Each RuvB hexamer is contacted by two RuvA subunits (via domain III) on 2 adjacent RuvB subunits; this complex drives branch migration. In the full resolvosome a probable DNA-RuvA(4)-RuvB(12)-RuvC(2) complex forms which resolves the HJ.

It localises to the cytoplasm. In terms of biological role, the RuvA-RuvB-RuvC complex processes Holliday junction (HJ) DNA during genetic recombination and DNA repair, while the RuvA-RuvB complex plays an important role in the rescue of blocked DNA replication forks via replication fork reversal (RFR). RuvA specifically binds to HJ cruciform DNA, conferring on it an open structure. The RuvB hexamer acts as an ATP-dependent pump, pulling dsDNA into and through the RuvAB complex. HJ branch migration allows RuvC to scan DNA until it finds its consensus sequence, where it cleaves and resolves the cruciform DNA. In Ehrlichia ruminantium (strain Gardel), this protein is Holliday junction branch migration complex subunit RuvA.